The chain runs to 705 residues: Polyribonucleotide nucleotidyltransferase (705 aa).

Asp-487 and Asp-493 together coordinate Mg(2+). Positions 554–613 (PKILTMSINPDKIRDVIGPSGKQINKIIEDTGVKIDIEQDGTIFISSTDESMNQKAKKII) constitute a KH domain. The 69-residue stretch at 623-691 (GQLYLGKVKR…KQGRVNLSRK (69 aa)) folds into the S1 motif domain.

It belongs to the polyribonucleotide nucleotidyltransferase family. Mg(2+) serves as cofactor.

Its subcellular location is the cytoplasm. The catalysed reaction is RNA(n+1) + phosphate = RNA(n) + a ribonucleoside 5'-diphosphate. Functionally, involved in mRNA degradation. Catalyzes the phosphorolysis of single-stranded polyribonucleotides processively in the 3'- to 5'-direction. This Bacillus licheniformis (strain ATCC 14580 / DSM 13 / JCM 2505 / CCUG 7422 / NBRC 12200 / NCIMB 9375 / NCTC 10341 / NRRL NRS-1264 / Gibson 46) protein is Polyribonucleotide nucleotidyltransferase.